Here is a 286-residue protein sequence, read N- to C-terminus: 4-diphosphocytidyl-2-C-methyl-D-erythritol kinase (286 aa).

Lysine 8 is a catalytic residue. Residue 92–102 participates in ATP binding; it reads PVSAGLAGGST. Aspartate 134 is a catalytic residue.

This sequence belongs to the GHMP kinase family. IspE subfamily.

It catalyses the reaction 4-CDP-2-C-methyl-D-erythritol + ATP = 4-CDP-2-C-methyl-D-erythritol 2-phosphate + ADP + H(+). Its pathway is isoprenoid biosynthesis; isopentenyl diphosphate biosynthesis via DXP pathway; isopentenyl diphosphate from 1-deoxy-D-xylulose 5-phosphate: step 3/6. In terms of biological role, catalyzes the phosphorylation of the position 2 hydroxy group of 4-diphosphocytidyl-2C-methyl-D-erythritol. This is 4-diphosphocytidyl-2-C-methyl-D-erythritol kinase from Caldicellulosiruptor bescii (strain ATCC BAA-1888 / DSM 6725 / KCTC 15123 / Z-1320) (Anaerocellum thermophilum).